The primary structure comprises 109 residues: uncharacterized protein (109 aa).

It localises to the mitochondrion. This is an uncharacterized protein from Arabidopsis thaliana (Mouse-ear cress).